The primary structure comprises 233 residues: Methylthioribulose-1-phosphate dehydratase (233 aa).

Substrate is bound at residue Cys-91. The Zn(2+) site is built by His-108 and His-110. The Proton donor/acceptor role is filled by Glu-137. His-194 is a binding site for Zn(2+).

The protein belongs to the aldolase class II family. MtnB subfamily. It depends on Zn(2+) as a cofactor.

Its subcellular location is the cytoplasm. The enzyme catalyses 5-(methylsulfanyl)-D-ribulose 1-phosphate = 5-methylsulfanyl-2,3-dioxopentyl phosphate + H2O. The protein operates within amino-acid biosynthesis; L-methionine biosynthesis via salvage pathway; L-methionine from S-methyl-5-thio-alpha-D-ribose 1-phosphate: step 2/6. Catalyzes the dehydration of methylthioribulose-1-phosphate (MTRu-1-P) into 2,3-diketo-5-methylthiopentyl-1-phosphate (DK-MTP-1-P). The chain is Methylthioribulose-1-phosphate dehydratase from Phaeosphaeria nodorum (strain SN15 / ATCC MYA-4574 / FGSC 10173) (Glume blotch fungus).